The sequence spans 427 residues: MGPRWLLLWAAGLGLCSPLVSARTRGPRPGTDPTNGTLGPRSFFLRNSNDGYEQIPLPEDEDSSEGEFTEDRLSSGNRSSPPQKSPPGFISKSASGYLTSAWLTVFIPSVYTGVFLVSLPLNIMAVVVFVLKMKVKKPAVVYMLHLAAADVLFVCVLPFKISYYFSGSDWRFGSAMCRFVTAAFYGNMYASIMLMTAISVDRFLAVVYPIQSLSWRTLGRASFICLAIWAMAIAGVAPLLLQEQATQVPGLNITACHDVLNQTLLEGYYSYYFSAFSAVFFFVPLTLSTVSYVSIIRCLSSSTVANQNKKSRALLLSAAVFCIFILCFGPTNILLLLHYAFLSSDPMTEAAYFAYLLCVCVSSISCCIDPLIYYYASSECQRHLFAILHCKESSDPGSCNSSGQLMPSKMDTCSSNLSSSLYKKLLT.

Residues 1 to 21 (MGPRWLLLWAAGLGLCSPLVS) form the signal peptide. Positions 22–41 (ARTRGPRPGTDPTNGTLGPR) are cleaved as a propeptide — removed for receptor activation. Positions 23 to 87 (RTRGPRPGTD…RSSPPQKSPP (65 aa)) are disordered. Residue N35 is glycosylated (N-linked (GlcNAc...) asparagine). Residues 42 to 104 (SFFLRNSNDG…SGYLTSAWLT (63 aa)) lie on the Extracellular side of the membrane. A compositionally biased stretch (acidic residues) spans 58-68 (PEDEDSSEGEF). N-linked (GlcNAc...) asparagine glycosylation occurs at N77. The helical transmembrane segment at 105 to 130 (VFIPSVYTGVFLVSLPLNIMAVVVFV) threads the bilayer. Residues 131-139 (LKMKVKKPA) lie on the Cytoplasmic side of the membrane. Residues 140-159 (VVYMLHLAAADVLFVCVLPF) traverse the membrane as a helical segment. Over 160-178 (KISYYFSGSDWRFGSAMCR) the chain is Extracellular. C177 and C256 are disulfide-bonded. The chain crosses the membrane as a helical span at residues 179-200 (FVTAAFYGNMYASIMLMTAISV). Over 201-220 (DRFLAVVYPIQSLSWRTLGR) the chain is Cytoplasmic. Residues 221-241 (ASFICLAIWAMAIAGVAPLLL) traverse the membrane as a helical segment. The Extracellular portion of the chain corresponds to 242-270 (QEQATQVPGLNITACHDVLNQTLLEGYYS). Residues N252 and N261 are each glycosylated (N-linked (GlcNAc...) asparagine). The chain crosses the membrane as a helical span at residues 271–290 (YYFSAFSAVFFFVPLTLSTV). Residues 291–313 (SYVSIIRCLSSSTVANQNKKSRA) lie on the Cytoplasmic side of the membrane. Residues 314-336 (LLLSAAVFCIFILCFGPTNILLL) traverse the membrane as a helical segment. The Extracellular segment spans residues 337–351 (LHYAFLSSDPMTEAA). A helical transmembrane segment spans residues 352–376 (YFAYLLCVCVSSISCCIDPLIYYYA). At 377-427 (SSECQRHLFAILHCKESSDPGSCNSSGQLMPSKMDTCSSNLSSSLYKKLLT) the chain is on the cytoplasmic side. A Phosphoserine modification is found at S420.

This sequence belongs to the G-protein coupled receptor 1 family. Proteolytic cleavage by thrombin generates a new N-terminus that functions as a tethered ligand. Also proteolytically cleaved by cathepsin CTSG. In terms of processing, phosphorylated in the C-terminal tail; probably mediating desensitization prior to the uncoupling and internalization of the receptor.

Its subcellular location is the cell membrane. Its function is as follows. High affinity receptor that binds the activated thrombin, leading to calcium release from intracellular stores. The thrombin-activated receptor signaling pathway is mediated through PTX-insensitive G proteins, activation of phospholipase C resulting in the production of 1D-myo-inositol 1,4,5-trisphosphate (InsP3) which binds to InsP3 receptors causing calcium release from the stores. In astrocytes, the calcium released into the cytosol allows the Ca(2+)-dependent release of L-glutamate into the synaptic cleft through BEST1, that targets the neuronal postsynaptic GRIN2A/NMDAR receptor resulting in the synaptic plasticity regulation. May play a role in platelets activation and in vascular development. Mediates up-regulation of pro-inflammatory cytokines, such as MCP-1/CCL2 and IL6, triggered by coagulation factor Xa (F10) in cardiac fibroblasts and umbilical vein endothelial cells. In Bos taurus (Bovine), this protein is Proteinase-activated receptor 1.